Reading from the N-terminus, the 1001-residue chain is RNA-binding protein 12B (1001 aa).

Ser98, Ser101, and Ser112 each carry phosphoserine. Residue Lys114 forms a Glycyl lysine isopeptide (Lys-Gly) (interchain with G-Cter in SUMO2) linkage. Residues 119–128 show a composition bias toward polar residues; the sequence is NSGYGSSINQ. The disordered stretch occupies residues 119–147; the sequence is NSGYGSSINQDAGFHTNGTGHGNLRPRKT. Lys151 is covalently cross-linked (Glycyl lysine isopeptide (Lys-Gly) (interchain with G-Cter in SUMO2)). In terms of domain architecture, RRM 1 spans 155–230; that stretch reads PYLFLRGLPY…RFIEVMQGSE (76 aa). Basic and acidic residues predominate over residues 247–262; that stretch reads LRRSEEHSPPRGINDR. Residues 247 to 278 form a disordered region; the sequence is LRRSEEHSPPRGINDRHFRKRSHSKSPRRTRS. Phosphoserine occurs at positions 250 and 254. The span at 263–278 shows a compositional bias: basic residues; that stretch reads HFRKRSHSKSPRRTRS. Thr276 carries the phosphothreonine modification. 4 positions are modified to phosphoserine: Ser278, Ser280, Ser292, and Ser294. An RRM 2 domain is found at 284–360; that stretch reads FYVHLKNLSL…RPVHIDPISR (77 aa). At Lys319 the chain carries N6-acetyllysine. Residue Lys335 forms a Glycyl lysine isopeptide (Lys-Gly) (interchain with G-Cter in SUMO2) linkage. A Phosphoserine modification is found at Ser377. One can recognise an RRM 3 domain in the interval 400 to 477; the sequence is LCIYIRNFPF…TEVLLRLISE (78 aa). Residues Lys514 and Lys541 each participate in a glycyl lysine isopeptide (Lys-Gly) (interchain with G-Cter in SUMO2) cross-link. Residues 544 to 587 are disordered; it reads QRDFRQPDRHPPEDFRHSSEDFRFPPEDFRHSPEDFRRPREEDF. A phosphoserine mark is found at Ser575, Ser591, and Ser638. A compositionally biased stretch (basic and acidic residues) spans 631-881; that stretch reads LEEDFRRSPT…FRSPPDDFRS (251 aa). The disordered stretch occupies residues 631–882; that stretch reads LEEDFRRSPT…RSPPDDFRSH (252 aa). Thr640 is subject to Phosphothreonine. A phosphoserine mark is found at Ser710 and Ser718. Residue Lys895 forms a Glycyl lysine isopeptide (Lys-Gly) (interchain with G-Cter in SUMO2) linkage. In terms of domain architecture, RRM 4 spans 925–1001; that stretch reads TPIKIMNLPF…GPRKVKLTLL (77 aa).

This Homo sapiens (Human) protein is RNA-binding protein 12B (RBM12B).